A 159-amino-acid chain; its full sequence is 2-amino-4-hydroxy-6-hydroxymethyldihydropteridine pyrophosphokinase (159 aa).

This sequence belongs to the HPPK family. As to quaternary structure, monomer.

The enzyme catalyses 6-hydroxymethyl-7,8-dihydropterin + ATP = (7,8-dihydropterin-6-yl)methyl diphosphate + AMP + H(+). It participates in cofactor biosynthesis; tetrahydrofolate biosynthesis; 2-amino-4-hydroxy-6-hydroxymethyl-7,8-dihydropteridine diphosphate from 7,8-dihydroneopterin triphosphate: step 4/4. Functionally, catalyzes the transfer of pyrophosphate from adenosine triphosphate (ATP) to 6-hydroxymethyl-7,8-dihydropterin, an enzymatic step in folate biosynthesis pathway. This chain is 2-amino-4-hydroxy-6-hydroxymethyldihydropteridine pyrophosphokinase (folK), found in Escherichia coli (strain K12).